Here is a 130-residue protein sequence, read N- to C-terminus: MVEVWWSLIGAAVPALIAGQAWRIKKRHGEEERIKSARGREKSSDEIFVCERVCTSKRMLKKVGAFSKDPIPDTCVTVCGVSELDACSDACARTVCVNQHQVANWNDICLRRCQSECLKLSSSSSSSRYS.

The signal sequence occupies residues 1–18; sequence MVEVWWSLIGAAVPALIA.

This is an uncharacterized protein from Arabidopsis thaliana (Mouse-ear cress).